A 732-amino-acid polypeptide reads, in one-letter code: Interleukin-31 receptor subunit alpha (732 aa).

Residues 1-19 (MMWTWALWMLPSLCKFSLA) form the signal peptide. At 20-519 (ALPAKPENIS…FKTLSFSVFE (500 aa)) the chain is on the extracellular side. Fibronectin type-III domains follow at residues 24–122 (KPEN…IAKT), 124–225 (PPKI…TEEE), 223–315 (EEEA…PVAT), 319–416 (PAIQ…QAYA), and 421–515 (PSEG…TLSF). Asparagine 37, asparagine 67, asparagine 93, asparagine 166, asparagine 187, asparagine 277, asparagine 283, asparagine 395, asparagine 455, and asparagine 504 each carry an N-linked (GlcNAc...) asparagine glycan. A helical transmembrane segment spans residues 520-540 (IILITSLIGGGLLILIILTVA). Topologically, residues 541–732 (YGLKKPNKLT…KLPEHTKGEV (192 aa)) are cytoplasmic.

It belongs to the type I cytokine receptor family. Type 2 subfamily. As to quaternary structure, heterodimer with OSMR. Interacts with JAK1 and STAT3. Post-translationally, N-glycosylated. Expressed in CD14- and CD56-positive blood cells. Expressed in macrophages. Expressed in keratinocytes. Expressed in a subset of dorsal root ganglia neurons (at protein level). Expressed at low levels in testis, ovary, brain, prostate, placenta, thymus, bone marrow, trachea and skin. Expressed in bronchial and alveolar epithelial cells and pulmonary fibroblasts. Detected in all of the myelomonocytic lineage. Isoform 6: Expressed at higher levels in lesional skin compared to healthy skin of atopic dermatitis patients.

Its subcellular location is the cell membrane. It is found in the presynaptic cell membrane. The protein localises to the cell projection. The protein resides in the axon. Its function is as follows. Associates with OSMR to form the interleukin-31 receptor which activates STAT3 and to a lower extent STAT1 and STAT5. May function in skin immunity. Mediates IL31-induced itch, probably in a manner dependent on cation channels TRPA1 and TRPV1. Positively regulates numbers and cycling status of immature subsets of myeloid progenitor cells in bone marrow in vivo and enhances myeloid progenitor cell survival in vitro. The sequence is that of Interleukin-31 receptor subunit alpha (IL31RA) from Homo sapiens (Human).